A 712-amino-acid polypeptide reads, in one-letter code: Polyribonucleotide nucleotidyltransferase (712 aa).

2 residues coordinate Mg(2+): Asp487 and Asp493. Residues 554 to 613 (PRIEVMNIPVDKIREVIGSGGKVIREIVEKTGAKINIEDDGTVKIASSSGKEIEAARKWI) form the KH domain. The S1 motif domain maps to 623–691 (GQIYEGTVVK…ERGKVRLSMK (69 aa)).

Belongs to the polyribonucleotide nucleotidyltransferase family. The cofactor is Mg(2+).

The protein resides in the cytoplasm. The enzyme catalyses RNA(n+1) + phosphate = RNA(n) + a ribonucleoside 5'-diphosphate. Functionally, involved in mRNA degradation. Catalyzes the phosphorolysis of single-stranded polyribonucleotides processively in the 3'- to 5'-direction. This Rhizobium etli (strain CIAT 652) protein is Polyribonucleotide nucleotidyltransferase.